Consider the following 354-residue polypeptide: Type II methylase M.HgiDII (354 aa).

Residues 3 to 344 form the SAM-dependent MTase C5-type domain; that stretch reads GAVIDLFCGV…KSIKRFLEGL (342 aa). The active site involves Cys79.

This sequence belongs to the class I-like SAM-binding methyltransferase superfamily. C5-methyltransferase family.

It catalyses the reaction a 2'-deoxycytidine in DNA + S-adenosyl-L-methionine = a 5-methyl-2'-deoxycytidine in DNA + S-adenosyl-L-homocysteine + H(+). Functionally, a methylase that recognizes the double-stranded sequence 5'-GTCGAC-3', methylates C-? on both strands and protects the DNA from cleavage by the HgiDII endonuclease. This Herpetosiphon aurantiacus (Herpetosiphon giganteus) protein is Type II methylase M.HgiDII.